Here is a 434-residue protein sequence, read N- to C-terminus: Ribosomal protein uS12 methylthiotransferase RimO (434 aa).

The 111-residue stretch at Ala2–Pro112 folds into the MTTase N-terminal domain. Positions 11, 47, 76, 142, 146, and 149 each coordinate [4Fe-4S] cluster. The region spanning Leu128–Arg365 is the Radical SAM core domain. Residues Gln368 to Ala434 enclose the TRAM domain.

The protein belongs to the methylthiotransferase family. RimO subfamily. [4Fe-4S] cluster is required as a cofactor.

It is found in the cytoplasm. It carries out the reaction L-aspartate(89)-[ribosomal protein uS12]-hydrogen + (sulfur carrier)-SH + AH2 + 2 S-adenosyl-L-methionine = 3-methylsulfanyl-L-aspartate(89)-[ribosomal protein uS12]-hydrogen + (sulfur carrier)-H + 5'-deoxyadenosine + L-methionine + A + S-adenosyl-L-homocysteine + 2 H(+). Its function is as follows. Catalyzes the methylthiolation of an aspartic acid residue of ribosomal protein uS12. This chain is Ribosomal protein uS12 methylthiotransferase RimO, found in Thermus thermophilus (strain ATCC BAA-163 / DSM 7039 / HB27).